Reading from the N-terminus, the 160-residue chain is METALAEVQLSCLLCEQTFDATEKLDEHLPTHFPQPVSTGQTCDICGRTMRSSLELHQHYKRYHEAHVPNTEGHFQCQLCDKVFLLQDHLKVHVKIEHATDGYQPDEKSLDWQHYSPRSLDTTNDYKLDPILCPPPKRKYPPRSPFFNPNLWLGADNCFM.

C2H2-type zinc fingers lie at residues 10–32, 41–64, and 75–98; these read LSCL…LPTH, QTCD…KRYH, and FQCQ…KIEH. Tyr115 carries the phosphotyrosine modification. Ser116 is modified (phosphoserine).

It localises to the nucleus. Its function is as follows. May be involved in transcriptional regulation. This is an uncharacterized protein from Drosophila melanogaster (Fruit fly).